Here is a 284-residue protein sequence, read N- to C-terminus: Thymidylate synthase (284 aa).

Residue Arg34 coordinates dUMP. Residue His64 coordinates (6R)-5,10-methylene-5,6,7,8-tetrahydrofolate. 139 to 140 serves as a coordination point for dUMP; the sequence is RR. Cys159 (nucleophile) is an active-site residue. Residues 186–189, Asn197, and 227–229 contribute to the dUMP site; these read RSAD and HIY. Asp189 lines the (6R)-5,10-methylene-5,6,7,8-tetrahydrofolate pocket. Residue Ala283 coordinates (6R)-5,10-methylene-5,6,7,8-tetrahydrofolate.

Belongs to the thymidylate synthase family. Bacterial-type ThyA subfamily. Homodimer.

It is found in the cytoplasm. It catalyses the reaction dUMP + (6R)-5,10-methylene-5,6,7,8-tetrahydrofolate = 7,8-dihydrofolate + dTMP. Its pathway is pyrimidine metabolism; dTTP biosynthesis. Functionally, catalyzes the reductive methylation of 2'-deoxyuridine-5'-monophosphate (dUMP) to 2'-deoxythymidine-5'-monophosphate (dTMP) while utilizing 5,10-methylenetetrahydrofolate (mTHF) as the methyl donor and reductant in the reaction, yielding dihydrofolate (DHF) as a by-product. This enzymatic reaction provides an intracellular de novo source of dTMP, an essential precursor for DNA biosynthesis. This chain is Thymidylate synthase, found in Polaromonas sp. (strain JS666 / ATCC BAA-500).